The following is a 324-amino-acid chain: Olfactory receptor 2T2 (324 aa).

The Extracellular segment spans residues 1–26 (MGMEGLLQNSTNFVLTGLITHPAFPG). Asn-9 carries N-linked (GlcNAc...) asparagine glycosylation. The chain crosses the membrane as a helical span at residues 27 to 50 (LLFAIVFSIFVVAITANLVMILLI). Over 51 to 58 (HMDSRLHT) the chain is Cytoplasmic. Residues 59 to 80 (PMYFLLSQLSIMDTIYICITVP) form a helical membrane-spanning segment. Residues 81–101 (KMLQDLLSKDKTISFLGCAVQ) lie on the Extracellular side of the membrane. Cys-98 and Cys-190 form a disulfide bridge. A helical transmembrane segment spans residues 102-121 (IFLYLTLIGGEFFLLGLMAY). Over 122 to 140 (DRYVAVCNPLRYPLLMNRR) the chain is Cytoplasmic. The chain crosses the membrane as a helical span at residues 141-159 (VCLFMVVGSWVGGSLDGFM). Residues 160–196 (LTPVTMSFPFCRSREINHFFCEIPAVLKLSCTDTSLY) lie on the Extracellular side of the membrane. The helical transmembrane segment at 197–220 (ETLMYACCVLMLLIPLSVISVSYT) threads the bilayer. Residues 221–237 (HILLTVHRMNSAEGRRK) lie on the Cytoplasmic side of the membrane. Residues 238–260 (AFATCSSHIMVVSVFYGAAFYTN) form a helical membrane-spanning segment. Topologically, residues 261 to 273 (VLPHSYHTPEKDK) are extracellular. The chain crosses the membrane as a helical span at residues 274-293 (VVSAFYTILTPMLNPLIYSL). The Cytoplasmic segment spans residues 294–324 (RNKDVAAALRKVLGRCGSSQSIRVATVIRKG).

This sequence belongs to the G-protein coupled receptor 1 family.

Its subcellular location is the cell membrane. In terms of biological role, odorant receptor. This is Olfactory receptor 2T2 (OR2T2) from Homo sapiens (Human).